The following is a 1671-amino-acid chain: Kinesin-like protein unc-104 (1671 aa).

The Kinesin motor domain maps to 3-351 (SVKVAVRVRP…LRYADRAKQI (349 aa)). An ATP-binding site is contributed by 97-104 (GQTGAGKS). The stretch at 358 to 437 (NEDANAKLIR…IAELNETWEE (80 aa)) forms a coiled coil. The tract at residues 391–413 (DELNKSTTGIKSPSKSRNRNGST) is disordered. Residues 395–413 (KSTTGIKSPSKSRNRNGST) show a composition bias toward polar residues. The 67-residue stretch at 500-566 (TRLGTHEANV…LKTGSRVILG (67 aa)) folds into the FHA domain. Residues 577 to 674 (EQARELREKI…EEQSMTMSMY (98 aa)) adopt a coiled-coil conformation. Residues 949 to 973 (DVDSGRGIDSNSASDCPENAEEPGE) are disordered. The 99-residue stretch at 1538 to 1636 (VVARKGLLNV…WLYAINPLLA (99 aa)) folds into the PH domain.

It belongs to the TRAFAC class myosin-kinesin ATPase superfamily. Kinesin family. Unc-104 subfamily. As to quaternary structure, monomer.

It localises to the cytoplasm. The protein resides in the cytoskeleton. Required for presynaptic maturation, has a role in axonal transport of dense-core vesicles carrying synaptic vesicle precursors, components required for the morphological transformation of axonal growth cones to mature boutons. The polypeptide is Kinesin-like protein unc-104 (Drosophila pseudoobscura pseudoobscura (Fruit fly)).